A 263-amino-acid polypeptide reads, in one-letter code: Eukaryotic translation initiation factor 3 subunit J-B (263 aa).

Acidic residues-rich tracts occupy residues Met-1–Glu-13 and Glu-30–Glu-50. 2 disordered regions span residues Met-1–Lys-75 and Lys-214–Gly-235. Residues Glu-30 to Ala-127 adopt a coiled-coil conformation. Over residues Glu-51 to Lys-75 the composition is skewed to basic and acidic residues.

Belongs to the eIF-3 subunit J family. As to quaternary structure, component of the eukaryotic translation initiation factor 3 (eIF-3) complex, which is composed of 13 subunits: eif3a, eif3b, eif3c, eif3d, eif3e, eif3f, eif3g, eif3h, eif3i, eif3j, eif3k, eif3l and eif3m.

Its subcellular location is the cytoplasm. Component of the eukaryotic translation initiation factor 3 (eIF-3) complex, which is involved in protein synthesis of a specialized repertoire of mRNAs and, together with other initiation factors, stimulates binding of mRNA and methionyl-tRNAi to the 40S ribosome. The eIF-3 complex specifically targets and initiates translation of a subset of mRNAs involved in cell proliferation. This Danio rerio (Zebrafish) protein is Eukaryotic translation initiation factor 3 subunit J-B (eif3jb).